The chain runs to 278 residues: Pantothenate synthetase (278 aa).

26 to 33 (MGNLHEGH) contacts ATP. Catalysis depends on H33, which acts as the Proton donor. Q57 serves as a coordination point for (R)-pantoate. Residue Q57 coordinates beta-alanine. 144–147 (GKKD) contacts ATP. Position 150 (Q150) interacts with (R)-pantoate. ATP-binding positions include G173 and 181-184 (LSSR).

It belongs to the pantothenate synthetase family. As to quaternary structure, homodimer.

The protein resides in the cytoplasm. The catalysed reaction is (R)-pantoate + beta-alanine + ATP = (R)-pantothenate + AMP + diphosphate + H(+). It functions in the pathway cofactor biosynthesis; (R)-pantothenate biosynthesis; (R)-pantothenate from (R)-pantoate and beta-alanine: step 1/1. In terms of biological role, catalyzes the condensation of pantoate with beta-alanine in an ATP-dependent reaction via a pantoyl-adenylate intermediate. The sequence is that of Pantothenate synthetase from Neisseria meningitidis serogroup A / serotype 4A (strain DSM 15465 / Z2491).